The sequence spans 2319 residues: Neurogenic locus notch homolog protein 3 (2319 aa).

Over residues 1–14 (MGPGARGRRRRRRL) the composition is skewed to basic residues. Residues 1–20 (MGPGARGRRRRRRLMALPPP) form a disordered region. An N-terminal signal peptide occupies residues 1–40 (MGPGARGRRRRRRLMALPPPPPPMRALPLLLLLLAGLGAA). 3 EGF-like domains span residues 41–79 (APPCLDGSPCANGGRCTHQQPSREAACLCLPGWVGERCQ), 80–120 (LEDP…PDCS), and 121–158 (LPDPCFSSPCAHGAPCSVGSDGRYACACPPGYQGRNCR). Topologically, residues 41–1645 (APPCLDGSPC…LEPPEQSVPL (1605 aa)) are extracellular. Disulfide bonds link Cys44-Cys56, Cys50-Cys67, Cys69-Cys78, Cys84-Cys95, Cys89-Cys108, Cys110-Cys119, Cys125-Cys136, Cys130-Cys146, Cys148-Cys157, Cys164-Cys176, Cys170-Cys185, Cys187-Cys196, Cys203-Cys214, Cys208-Cys224, Cys226-Cys235, Cys242-Cys253, Cys247-Cys262, Cys264-Cys273, Cys280-Cys293, Cys287-Cys302, Cys304-Cys313, Cys320-Cys331, Cys325-Cys340, Cys342-Cys351, Cys357-Cys368, Cys362-Cys379, Cys381-Cys390, Cys397-Cys410, Cys404-Cys419, Cys421-Cys430, Cys437-Cys448, Cys442-Cys457, Cys459-Cys468, Cys475-Cys486, Cys480-Cys495, Cys497-Cys506, Cys513-Cys524, Cys518-Cys533, Cys535-Cys544, Cys551-Cys561, Cys556-Cys570, Cys572-Cys581, Cys588-Cys599, Cys593-Cys608, Cys610-Cys619, Cys626-Cys636, Cys631-Cys645, Cys647-Cys656, Cys663-Cys674, Cys668-Cys683, Cys685-Cys694, Cys701-Cys711, Cys706-Cys720, Cys722-Cys731, Cys740-Cys751, Cys745-Cys760, Cys762-Cys771, Cys777-Cys788, Cys782-Cys798, Cys800-Cys809, Cys816-Cys828, Cys822-Cys837, Cys839-Cys848, Cys855-Cys866, Cys860-Cys875, Cys877-Cys886, Cys893-Cys903, Cys898-Cys912, Cys914-Cys923, Cys930-Cys941, Cys935-Cys950, Cys952-Cys961, Cys968-Cys979, Cys973-Cys988, Cys990-Cys999, Cys1006-Cys1017, Cys1011-Cys1024, Cys1026-Cys1035, Cys1042-Cys1063, Cys1057-Cys1072, Cys1074-Cys1083, Cys1090-Cys1101, Cys1095-Cys1110, Cys1112-Cys1121, Cys1128-Cys1139, Cys1133-Cys1148, Cys1150-Cys1159, Cys1166-Cys1184, Cys1178-Cys1193, Cys1195-Cys1204, Cys1211-Cys1224, Cys1216-Cys1234, Cys1236-Cys1245, Cys1252-Cys1263, Cys1257-Cys1277, Cys1279-Cys1288, Cys1295-Cys1306, Cys1300-Cys1315, and Cys1317-Cys1326. An EGF-like 4; calcium-binding domain is found at 160 to 197 (DIDECRAGASCRHGGTCINTPGSFHCLCPLGYTGLLCE). Positions 199–236 (PIVPCAPSPCRNGGTCRQSSDVTYDCACLPGFEGQNCE) constitute an EGF-like 5 domain. The EGF-like 6; calcium-binding domain maps to 238–274 (NVDDCPGHRCLNGGTCVDGVNTYNCQCPPEWTGQFCT). Positions 276–314 (DVDECQLQPNACHNGGTCFNLLGGHSCVCVNGWTGESCS) constitute an EGF-like 7 domain. The EGF-like 8; calcium-binding domain maps to 316–352 (NIDDCATAVCFHGATCHDRVASFYCACPMGKTGLLCH). An EGF-like 9 domain is found at 353–391 (LDDACVSNPCHEDAICDTNPVSGRAICTCPPGFTGGACD). In terms of domain architecture, EGF-like 10; calcium-binding spans 393 to 431 (DVDECSIGANPCEHLGRCVNTQGSFLCQCGRGYTGPRCE). Residues 433–469 (DVNECLSGPCRNQATCLDRIGQFTCICMAGFTGTFCE) form the EGF-like 11; calcium-binding domain. In terms of domain architecture, EGF-like 12; calcium-binding spans 471 to 507 (DIDECQSSPCVNGGVCKDRVNGFSCTCPSGFSGSTCQ). The 37-residue stretch at 509–545 (DVDECASTPCRNGAKCVDQPDGYECRCAEGFEGTLCE) folds into the EGF-like 13; calcium-binding domain. Positions 547-582 (NVDDCSPDPCHHGRCVDGIASFSCACAPGYTGIRCE) constitute an EGF-like 14; calcium-binding domain. Residues 584 to 620 (QVDECRSQPCRYGGKCLDLVDKYLCRCPPGTTGVNCE) form the EGF-like 15; calcium-binding domain. Residues 622–657 (NIDDCASNPCTFGVCRDGINRYDCVCQPGFTGPLCN) enclose the EGF-like 16; calcium-binding domain. The EGF-like 17; calcium-binding domain occupies 659–695 (EINECASSPCGEGGSCVDGENGFHCLCPPGSLPPLCL). EGF-like domains are found at residues 697-732 (ANHPCAHKPCSHGVCHDAPGGFQCVCDPGWSGPRCS), 736-772 (APDACESQPCQAGGTCTSDGIGFHCTCAPGFQGHQCE), and 773-810 (VLSPCTPSLCEHGGHCESDPDQLTVCSCPPGWQGPRCQ). Residues 812 to 849 (DVDECAGASPCGPHGTCTNLPGSFRCICHGGYTGPFCD) form the EGF-like 21; calcium-binding domain. One can recognise an EGF-like 22; calcium-binding domain in the interval 851–887 (DIDDCDPNPCLNGGSCQDGVGSFSCSCLSGFAGPRCA). The 36-residue stretch at 889–924 (DVDECLSSPCGPGTCTDHVASFTCTCPPGYGGFHCE) folds into the EGF-like 23; calcium-binding domain. EGF-like domains are found at residues 926–962 (DLLDCSPSSCFNGGTCVDGVNSFSCLCRPGYTGTHCQ), 964–1000 (KVDPCFSRPCLHGGICNPTHSGFECTCREGFTGNQCQ), 1002–1036 (PVDWCSQAPCQNGGRCVQTGAYCICPPEWSGPLCD), 1038–1084 (PSLP…SHCE), and 1086–1122 (EVDPCTAQPCQHGGTCRGYMGGYVCECPTGYSGDSCE). One can recognise an EGF-like 29; calcium-binding domain in the interval 1124–1160 (DVDECASQPCQNGGSCIDLVAHYLCSCPPGTLGVLCE). The EGF-like 30; calcium-binding domain occupies 1162–1205 (NEDDCGPGPSLDSGLRCLHNGTCVDLVGGFRCNCPPGYTGLHCE). N-linked (GlcNAc...) asparagine glycosylation is present at Asn1181. EGF-like domains are found at residues 1207–1246 (DINECRPGTCHAAHTRDCLQDPGGHFRCICLPGFTGPRCQ), 1248–1289 (ALFP…LRCE), 1291–1327 (VARSCRELQCPVGIPCQQTARGPRCACPPGLSGPSCR), and 1337–1375 (TNTSCAATPCLHGGSCLPVQSVPFFRCVCAPGWGGPRCE). Asn1338 carries an N-linked (GlcNAc...) asparagine glycan. Intrachain disulfides connect Cys1341/Cys1352, Cys1346/Cys1363, Cys1365/Cys1374, Cys1389/Cys1412, Cys1394/Cys1407, Cys1403/Cys1419, Cys1430/Cys1453, Cys1435/Cys1448, Cys1444/Cys1460, Cys1469/Cys1495, Cys1477/Cys1490, and Cys1486/Cys1502. LNR repeat units lie at residues 1389–1429 (CPRA…PWRQ), 1430–1467 (CEALQCWRLFNNSRCDPACSSPACLYDNFDCYSGGRDR), and 1469–1507 (CNPVYKKYCADHFADGRCDQGCNTEECGWDGLDCASEVP). The N-linked (GlcNAc...) asparagine glycan is linked to Asn1440. Residues 1646-1666 (LPLLVAGAVFLLVIFVLGVMV) traverse the membrane as a helical segment. Topologically, residues 1667 to 2319 (ARRKREHSTL…EVTPKRQVMA (653 aa)) are cytoplasmic. 5 ANK repeats span residues 1840 to 1869 (TGETALHLAARYARADAAKRLLDAGADTNA), 1873 to 1903 (SGRTPLHTAVTADAQGVFQILIRNRSTDLDA), 1907 to 1936 (DGSTALILAARLAVEGMVEELIASHADVNA), 1940 to 1969 (LGKSALHWAAAVNNVEATLALLKNGANKDM), and 1973 to 2002 (KEETPLFLAAREGSYEAAKLLLDHFANREI). Disordered stretches follow at residues 2026-2046 (LDQPSGPRSPSGPHGLGPLLC) and 2059-2129 (QSGT…EGPY). Residues 2029–2046 (PSGPRSPSGPHGLGPLLC) show a composition bias toward low complexity. Omega-N-methylarginine is present on Arg2175. The interval 2197 to 2319 (LNPATPVSPH…EVTPKRQVMA (123 aa)) is disordered. Residues 2263–2288 (SLSDWSDSTPSPATATSATAAGALPA) are compositionally biased toward low complexity. The segment covering 2297-2306 (SLPQSQTQLG) has biased composition (polar residues).

This sequence belongs to the NOTCH family. As to quaternary structure, heterodimer of a C-terminal fragment N(TM) and a N-terminal fragment N(EC) which are probably linked by disulfide bonds. Interacts with MAML1, MAML2 and MAML3 which act as transcriptional coactivators for NOTCH3. Interacts with PSMA1. Interacts with HIF1AN. Post-translationally, synthesized in the endoplasmic reticulum as an inactive form which is proteolytically cleaved by a furin-like convertase in the trans-Golgi network before it reaches the plasma membrane to yield an active, ligand-accessible form. Cleavage results in a C-terminal fragment N(TM) and a N-terminal fragment N(EC). Following ligand binding, it is cleaved by TNF-alpha converting enzyme (TACE) to yield a membrane-associated intermediate fragment called notch extracellular truncation (NEXT). This fragment is then cleaved by presenilin dependent gamma-secretase to release a notch-derived peptide containing the intracellular domain (NICD) from the membrane. Phosphorylated. In terms of processing, hydroxylated by HIF1AN. In terms of tissue distribution, expressed in postnatal central nervous system (CNS) germinal zones and, in early postnatal life, within numerous cells throughout the CNS. It is more highly localized to ventricular germinal zones.

Its subcellular location is the cell membrane. The protein resides in the nucleus. Functions as a receptor for membrane-bound ligands Jagged1, Jagged2 and Delta1 to regulate cell-fate determination. Upon ligand activation through the released notch intracellular domain (NICD) it forms a transcriptional activator complex with RBPJ/RBPSUH and activates genes of the enhancer of split locus. Affects the implementation of differentiation, proliferation and apoptotic programs. Acts instructively to control the cell fate determination of CNS multipotent progenitor cells, resulting in astroglial induction and neuron/oligodendrocyte suppression. The chain is Neurogenic locus notch homolog protein 3 (Notch3) from Rattus norvegicus (Rat).